Consider the following 341-residue polypeptide: Methionine import ATP-binding protein MetN 1 (341 aa).

The ABC transporter domain occupies 2–241 (IEFRQVSKTF…PKTTIAQNFV (240 aa)). 38 to 45 (GYSGAGKS) provides a ligand contact to ATP.

Belongs to the ABC transporter superfamily. Methionine importer (TC 3.A.1.24) family. In terms of assembly, the complex is composed of two ATP-binding proteins (MetN), two transmembrane proteins (MetI) and a solute-binding protein (MetQ).

Its subcellular location is the cell membrane. The enzyme catalyses L-methionine(out) + ATP + H2O = L-methionine(in) + ADP + phosphate + H(+). The catalysed reaction is D-methionine(out) + ATP + H2O = D-methionine(in) + ADP + phosphate + H(+). Functionally, part of the ABC transporter complex MetNIQ involved in methionine import. Responsible for energy coupling to the transport system. This is Methionine import ATP-binding protein MetN 1 from Staphylococcus aureus (strain USA300).